A 434-amino-acid chain; its full sequence is MRRNRVDVITLGCSKNLVDSEVLMRQFLSNGYTVHHDPASVCGEIVVVNTCGFIGDAQEESVNTILEMVEAKKAGRIGSLYVMGCLSERFREDLKKEIPEVDAYYGKFDWKQLISHLGKSYYAEAENRRKLTTPRHYAYLKISEGCDRSCSYCAIPIITGRHRSRPMEDLVEEVRMLVKHGTREFQLIAQDLTFYGLDLYGANRLAELTARLSDIKGVEWLRLHYAYPAQFPLDLLPVMRERPNVCKYLDMALQHISDPMLRRMRRRITKAETYELIERIRTEVPGIHLRTTLMTGHPGETERDFEELLQFVRDIRFERLGAFTYSHESGTYCDKNYQDDIPESVKQERLGELMAVQERISAAHNEAKIGSRLRVVIDRAEDGFYVGRTEYDSPEVDPEVLIPFVSGQELKPGRFYMAEVTGAEPFDLYARIVD.

In terms of domain architecture, MTTase N-terminal spans 4–122; sequence NRVDVITLGC…LISHLGKSYY (119 aa). [4Fe-4S] cluster is bound by residues C13, C51, C85, C146, C150, and C153. In terms of domain architecture, Radical SAM core spans 132-363; sequence TTPRHYAYLK…MAVQERISAA (232 aa). Positions 366-434 constitute a TRAM domain; the sequence is EAKIGSRLRV…PFDLYARIVD (69 aa).

The protein belongs to the methylthiotransferase family. RimO subfamily. The cofactor is [4Fe-4S] cluster.

It is found in the cytoplasm. It catalyses the reaction L-aspartate(89)-[ribosomal protein uS12]-hydrogen + (sulfur carrier)-SH + AH2 + 2 S-adenosyl-L-methionine = 3-methylsulfanyl-L-aspartate(89)-[ribosomal protein uS12]-hydrogen + (sulfur carrier)-H + 5'-deoxyadenosine + L-methionine + A + S-adenosyl-L-homocysteine + 2 H(+). Functionally, catalyzes the methylthiolation of an aspartic acid residue of ribosomal protein uS12. This Porphyromonas gingivalis (strain ATCC 33277 / DSM 20709 / CIP 103683 / JCM 12257 / NCTC 11834 / 2561) protein is Ribosomal protein uS12 methylthiotransferase RimO.